The chain runs to 321 residues: Thioredoxin reductase tcpT (321 aa).

FAD-binding positions include 14–17 (GGPA), 36–41 (DSGRYR), His49, and Ala114. Cysteines 138 and 141 form a disulfide. FAD-binding positions include Asp282 and 289–290 (NV).

This sequence belongs to the class-II pyridine nucleotide-disulfide oxidoreductase family. Homodimer. The cofactor is FAD.

Its pathway is secondary metabolite biosynthesis. Its function is as follows. Thioredoxin reductase; part of the gene cluster that mediates the biosynthesis of an unusual class of epipolythiodioxopiperazines (ETPs) lacking the reactive thiol group important for toxicity. Firstly, L-tyrosine is prenylated by tcpD, before undergoing condensation with L-glycine in a reaction catalyzed by the NRPS tcpP leading to the diketopiperazine (DKP) backbone. Afterwards the alpha-carbon of tyrosine is oxidized by the cytochrome P450 tcpC to form a hydroxyl group. However, in contrast other ETP biosynthesis pathways studied so far, tcpC is not able to bishydroxylate the DKP at both alpha-carbon positions, but hydroxylates the alpha-carbon of the tyrosine part and the nitrogen of the glycine part. The next steps involve an alpha,beta-elimination reaction catalyzed by tcpI, a methylation by the methyltransferase tcpN the action of the four enzyme cascade tcpG/K/J/I. Due to a dysfunctional cytochrome P450 monooxygenase tcpC, the pathway leads to the biosynthesis of probable non-toxic metabolites lacking the reactive thiol group. In Claviceps purpurea (strain 20.1) (Ergot fungus), this protein is Thioredoxin reductase tcpT.